The primary structure comprises 450 residues: Bifunctional protein GlmU (450 aa).

A pyrophosphorylase region spans residues 1 to 226 (MLAVAVLAAG…PDEVNGINNR (226 aa)). UDP-N-acetyl-alpha-D-glucosamine is bound by residues 7 to 10 (LAAG), K21, Q73, and 78 to 79 (GT). D103 serves as a coordination point for Mg(2+). G140, E155, N170, and N224 together coordinate UDP-N-acetyl-alpha-D-glucosamine. N224 is a binding site for Mg(2+). A linker region spans residues 227-247 (KQLAQCEGVLQQRLRDYWMDE). The interval 248–450 (GVTFVDPASC…TKDNWANRSI (203 aa)) is N-acetyltransferase. Residues R329 and K347 each contribute to the UDP-N-acetyl-alpha-D-glucosamine site. The active-site Proton acceptor is H359. Positions 362 and 373 each coordinate UDP-N-acetyl-alpha-D-glucosamine. Acetyl-CoA-binding positions include A376, 382–383 (NY), A419, and R436.

In the N-terminal section; belongs to the N-acetylglucosamine-1-phosphate uridyltransferase family. The protein in the C-terminal section; belongs to the transferase hexapeptide repeat family. As to quaternary structure, homotrimer. It depends on Mg(2+) as a cofactor.

The protein resides in the cytoplasm. The enzyme catalyses alpha-D-glucosamine 1-phosphate + acetyl-CoA = N-acetyl-alpha-D-glucosamine 1-phosphate + CoA + H(+). It carries out the reaction N-acetyl-alpha-D-glucosamine 1-phosphate + UTP + H(+) = UDP-N-acetyl-alpha-D-glucosamine + diphosphate. It participates in nucleotide-sugar biosynthesis; UDP-N-acetyl-alpha-D-glucosamine biosynthesis; N-acetyl-alpha-D-glucosamine 1-phosphate from alpha-D-glucosamine 6-phosphate (route II): step 2/2. It functions in the pathway nucleotide-sugar biosynthesis; UDP-N-acetyl-alpha-D-glucosamine biosynthesis; UDP-N-acetyl-alpha-D-glucosamine from N-acetyl-alpha-D-glucosamine 1-phosphate: step 1/1. Its pathway is bacterial outer membrane biogenesis; LPS lipid A biosynthesis. Its function is as follows. Catalyzes the last two sequential reactions in the de novo biosynthetic pathway for UDP-N-acetylglucosamine (UDP-GlcNAc). The C-terminal domain catalyzes the transfer of acetyl group from acetyl coenzyme A to glucosamine-1-phosphate (GlcN-1-P) to produce N-acetylglucosamine-1-phosphate (GlcNAc-1-P), which is converted into UDP-GlcNAc by the transfer of uridine 5-monophosphate (from uridine 5-triphosphate), a reaction catalyzed by the N-terminal domain. The protein is Bifunctional protein GlmU of Synechococcus sp. (strain CC9902).